A 319-amino-acid chain; its full sequence is ATP-dependent 6-phosphofructokinase (319 aa).

Residue Gly-11 participates in ATP binding. 21 to 25 is an ADP binding site; the sequence is RAVVR. ATP-binding positions include 72-73 and 102-105; these read RY and GDGS. Asp-103 is a Mg(2+) binding site. Substrate is bound at residue 125–127; the sequence is TID. Asp-127 serves as the catalytic Proton acceptor. Arg-154 lines the ADP pocket. Substrate is bound by residues Arg-162 and 169–171; that span reads MGR. ADP-binding positions include 185–187, Arg-211, and 213–215; these read GAE and KKH. Substrate-binding positions include Glu-222, Arg-243, and 249-252; that span reads HVQR.

Belongs to the phosphofructokinase type A (PFKA) family. ATP-dependent PFK group I subfamily. Prokaryotic clade 'B1' sub-subfamily. Homotetramer. The cofactor is Mg(2+).

The protein resides in the cytoplasm. The catalysed reaction is beta-D-fructose 6-phosphate + ATP = beta-D-fructose 1,6-bisphosphate + ADP + H(+). It participates in carbohydrate degradation; glycolysis; D-glyceraldehyde 3-phosphate and glycerone phosphate from D-glucose: step 3/4. With respect to regulation, allosterically activated by ADP and other diphosphonucleosides, and allosterically inhibited by phosphoenolpyruvate. Its function is as follows. Catalyzes the phosphorylation of D-fructose 6-phosphate to fructose 1,6-bisphosphate by ATP, the first committing step of glycolysis. The protein is ATP-dependent 6-phosphofructokinase of Listeria welshimeri serovar 6b (strain ATCC 35897 / DSM 20650 / CCUG 15529 / CIP 8149 / NCTC 11857 / SLCC 5334 / V8).